The following is a 679-amino-acid chain: Methionine--tRNA ligase (679 aa).

Residues 15 to 25 (PYANGPIHLGH) carry the 'HIGH' region motif. Zn(2+) contacts are provided by Cys146, Cys149, Cys159, and Cys162. The 'KMSKS' region motif lies at 332 to 336 (KMSKS). Residue Lys335 coordinates ATP. The tRNA-binding domain occupies 578-679 (DFAKIDLRIA…EGAQPGMKVK (102 aa)).

The protein belongs to the class-I aminoacyl-tRNA synthetase family. MetG type 1 subfamily. As to quaternary structure, homodimer. Requires Zn(2+) as cofactor.

Its subcellular location is the cytoplasm. It catalyses the reaction tRNA(Met) + L-methionine + ATP = L-methionyl-tRNA(Met) + AMP + diphosphate. In terms of biological role, is required not only for elongation of protein synthesis but also for the initiation of all mRNA translation through initiator tRNA(fMet) aminoacylation. In Shewanella pealeana (strain ATCC 700345 / ANG-SQ1), this protein is Methionine--tRNA ligase.